The chain runs to 1212 residues: MGKIKKIQRKGPPATKRPPKAARTESTDSALGLDAHSDLEKPATSSDDGFEEPTPKPKPSKKTTTLPEPVSIIAQKKNKFRTDDAKNVKPPTLEEMKELRDTRNLFHSNLFKLQVKEMLEELQLKTKYTEYIDNWMESFTVFTQRLKDGLVEKSQLEVPLNVDKKISGFIFSKPTKEPQLIGAASTGTLLGPKIVVDVALEMPKDCLHKDDYLNLIYDQKRALYLTYVTNQMRSDPAYSQDKFAFNYHGNNPLKPVLELTPAAKHVSKHLQLRLFITAPQSTFKPGRFVPWNNNIRPTYYNDEWDEEEALPSTQHYNASVLFDLTLAQNQALLDKAFKGRRNFQDGLLLLKVWLRQRELDRGFTGFGSHILASFIVYLNQQRILHQSSSSYQVARTVWNQLANTDWTNGITLAPASGQTEQLSTIAGYYDVCFMDVSGQLNLCANVPLGVYQRVRAEAKLAVDLLNDMKLNSFPYIFMQKCPLYTRVDNILKITNYSSIQQMLVLHSKPQMKYDFASYGYPQLLQILTELLQKGLKQRVQAILPIETVSSAWPVESKAPIIGQAIQLGLILDPEHAYEVLDKGPSSNDDPEGSAEFRKFWGEKSNLRRFQDGSITEAVVWGTTKDAPSKKRLIVRQIVMHLLEHHLQLDSKDIQYIAAELDLVYQLSPWFKVSKVKTKLELQQDTDAEALSPNVIRCYDDLARQLHALDDLPLEIVSISSISPVSRYCEPMPVLPQARMMADHIHASHIQRVIIQLGQSGKWPNELSALRALKTAFLIEIGEKLKAQCRLNWSITSEGLLVLKRGFCFLLELAHNKELALLKQEVTERGVTKYVDNPESRALEQRHYILPKVSGALHSLHQSHSAYGPTVLIAKRWLATQLLDDGIWPPMATELLVAHLYQQRNAPQAIAAPQTGFMRLLHLLAHSDWNGELFLLNFNSSWQEQQIGDLEHSFRSDRQSYPPLALATSYDQQHAGRLWTTGESPSLRILSHVSRLARHALEMIETSLQSKDLRFVRPAQLFRGSSEGYDLVIQLKSDLVPNALSYDLGSPFVSFDQPNYLLPRAGKDPLAAIVHQLRSAYSDYAAFFYNPHGGKELAIMWRPPAVFAPKAFKVTELQACTLCDKGKVQVVRETLVEDFKVLLKDFYLRISTPEELKREQREHQNPKRYFNAKPQDNESCSKSKKRKLAKAAKVQAPLKRKSLIKSRPLKSLS.

Disordered regions lie at residues 1 to 72 (MGKI…PVSI) and 1156 to 1212 (KREQ…KSLS). Basic residues predominate over residues 1197-1212 (LKRKSLIKSRPLKSLS).

This sequence belongs to the NRAP family. As to quaternary structure, part of the small subunit (SSU) processome, composed of more than 70 proteins and the RNA chaperone small nucleolar RNA (snoRNA) U3.

It localises to the nucleus. The protein resides in the nucleolus. It is found in the chromosome. Its function is as follows. Part of the small subunit (SSU) processome, first precursor of the small eukaryotic ribosomal subunit. During the assembly of the SSU processome in the nucleolus, many ribosome biogenesis factors, an RNA chaperone and ribosomal proteins associate with the nascent pre-rRNA and work in concert to generate RNA folding, modifications, rearrangements and cleavage as well as targeted degradation of pre-ribosomal RNA by the RNA exosome. The protein is Nucleolar protein 6 of Drosophila persimilis (Fruit fly).